The primary structure comprises 31 residues: Potassium channel toxin alpha-KTx 5.5 (31 aa).

3 disulfide bridges follow: Cys-3–Cys-21, Cys-8–Cys-26, and Cys-12–Cys-28. A [R/K]XCQ motif region spans residues 6–9 (RRCE). Residue His-31 is modified to Histidine amide.

As to expression, expressed by the venom gland.

It localises to the secreted. Functionally, blocks small conductance calcium-activated potassium channels. The chain is Potassium channel toxin alpha-KTx 5.5 from Hottentotta tamulus (Eastern Indian scorpion).